Reading from the N-terminus, the 292-residue chain is Glycine--tRNA ligase alpha subunit (292 aa).

This sequence belongs to the class-II aminoacyl-tRNA synthetase family. In terms of assembly, tetramer of two alpha and two beta subunits.

It localises to the cytoplasm. It carries out the reaction tRNA(Gly) + glycine + ATP = glycyl-tRNA(Gly) + AMP + diphosphate. The sequence is that of Glycine--tRNA ligase alpha subunit from Pelotomaculum thermopropionicum (strain DSM 13744 / JCM 10971 / SI).